The chain runs to 479 residues: U3 snoRNP-associated protein-like EMB2271 (479 aa).

The segment at 1 to 73 is disordered; the sequence is MKLEKKKGIG…AHETVGEKRK (73 aa). The segment covering 8–17 has biased composition (basic residues); it reads GIGAKRRGKK. Residues 18-38 are compositionally biased toward basic and acidic residues; sequence SSIDHDPFLEEETEKRRKFNY. The span at 39-51 shows a compositional bias: acidic residues; that stretch reads DDDDDIESVESEE. Residues 52 to 73 show a composition bias toward basic and acidic residues; the sequence is EGKVGEEVEDEFAHETVGEKRK. WD repeat units lie at residues 143-182, 204-243, 246-285, 288-326, 328-366, 386-425, and 431-471; these read KHQHSVTGVALSDDDSRGFSVSKDGTILHWDVSSGKSDEY, RHNKQSLALAVSSDGRYLATGGVDCHVHLWDIRTREHVQA, GHCGIVSSLCFREGTAELFSGSYDGTLSIWNAEHRTYIES, GHQSELLSIDALGRERVLSVGRDRTMQLYKVPESTRLIY, ASESNFECCCFVNSDEFLSGSDNGSIALWSILKKKPVFI, PACSWVSSVAVCRGSELAASGAGNGCVRLWGVESGSSAIQ, and PLPG…QNGV.

The protein belongs to the WD repeat RRP9 family.

It is found in the nucleus. Its subcellular location is the nucleolus. Functionally, component of a nucleolar small nuclear ribonucleoprotein particle (snoRNP) thought to participate in the processing and modification of pre-ribosomal RNA. Essential for embryogenesis. May function during late embryogenesis. In Arabidopsis thaliana (Mouse-ear cress), this protein is U3 snoRNP-associated protein-like EMB2271.